Here is a 248-residue protein sequence, read N- to C-terminus: MKSIVLLRHGESIWNKENRFTGWTDVDLTEKGVAEAYRAGNLLKEKGYVFNKAYTSYLKRAVKTLNCVLDRMDQDWIPVEKSWRLNEKHYGSLQGLNKSETAQKYGDEQVLIWRRSYDIAPLPLSEDDPRNPRFDIRYKDVPDKELPRTESLKDTVERILPYWKEVIFPTLRTADQILVAAHGNSLRGIIKYLKNISDEEIVHLNLPTAVPYVFEFDDDLKLVNDYFLGDPEEIKKLMEAVANQGKKK.

Substrate-binding positions include 8–15 (RHGESIWN), 21–22 (TG), arginine 60, 87–90 (EKHY), lysine 98, 114–115 (RR), and 183–184 (GN). Histidine 9 acts as the Tele-phosphohistidine intermediate in catalysis. Catalysis depends on glutamate 87, which acts as the Proton donor/acceptor.

This sequence belongs to the phosphoglycerate mutase family. BPG-dependent PGAM subfamily.

It catalyses the reaction (2R)-2-phosphoglycerate = (2R)-3-phosphoglycerate. The protein operates within carbohydrate degradation; glycolysis; pyruvate from D-glyceraldehyde 3-phosphate: step 3/5. Its function is as follows. Catalyzes the interconversion of 2-phosphoglycerate and 3-phosphoglycerate. In Parabacteroides distasonis (strain ATCC 8503 / DSM 20701 / CIP 104284 / JCM 5825 / NCTC 11152), this protein is 2,3-bisphosphoglycerate-dependent phosphoglycerate mutase.